Reading from the N-terminus, the 236-residue chain is Sugar fermentation stimulation protein homolog (236 aa).

The protein belongs to the SfsA family.

This chain is Sugar fermentation stimulation protein homolog, found in Pseudomonas fluorescens (strain SBW25).